Consider the following 163-residue polypeptide: Lipoprotein signal peptidase (163 aa).

The next 3 helical transmembrane spans lie at 11–31 (ILIA…IATT), 64–84 (MTFF…FFIN), and 88–108 (YNLF…GNFI). Residues Asp-118 and Asp-136 contribute to the active site. The chain crosses the membrane as a helical span at residues 131–151 (IFNIADSSLTIGVILIIIALL).

It belongs to the peptidase A8 family.

It is found in the cell membrane. It carries out the reaction Release of signal peptides from bacterial membrane prolipoproteins. Hydrolyzes -Xaa-Yaa-Zaa-|-(S,diacylglyceryl)Cys-, in which Xaa is hydrophobic (preferably Leu), and Yaa (Ala or Ser) and Zaa (Gly or Ala) have small, neutral side chains.. It functions in the pathway protein modification; lipoprotein biosynthesis (signal peptide cleavage). This protein specifically catalyzes the removal of signal peptides from prolipoproteins. This is Lipoprotein signal peptidase from Staphylococcus aureus (strain bovine RF122 / ET3-1).